Consider the following 279-residue polypeptide: 4-hydroxy-3-methylbut-2-enyl diphosphate reductase (279 aa).

Cys12 serves as a coordination point for [4Fe-4S] cluster. (2E)-4-hydroxy-3-methylbut-2-enyl diphosphate-binding residues include His41 and His74. Dimethylallyl diphosphate is bound by residues His41 and His74. Residues His41 and His74 each coordinate isopentenyl diphosphate. Cys96 provides a ligand contact to [4Fe-4S] cluster. Residue His124 coordinates (2E)-4-hydroxy-3-methylbut-2-enyl diphosphate. Dimethylallyl diphosphate is bound at residue His124. Residue His124 coordinates isopentenyl diphosphate. Glu126 serves as the catalytic Proton donor. Thr164 serves as a coordination point for (2E)-4-hydroxy-3-methylbut-2-enyl diphosphate. Position 192 (Cys192) interacts with [4Fe-4S] cluster. (2E)-4-hydroxy-3-methylbut-2-enyl diphosphate contacts are provided by Ser220, Ser221, Asn222, and Ser263. The dimethylallyl diphosphate site is built by Ser220, Ser221, Asn222, and Ser263. Ser220, Ser221, Asn222, and Ser263 together coordinate isopentenyl diphosphate.

It belongs to the IspH family. Requires [4Fe-4S] cluster as cofactor.

It carries out the reaction isopentenyl diphosphate + 2 oxidized [2Fe-2S]-[ferredoxin] + H2O = (2E)-4-hydroxy-3-methylbut-2-enyl diphosphate + 2 reduced [2Fe-2S]-[ferredoxin] + 2 H(+). The enzyme catalyses dimethylallyl diphosphate + 2 oxidized [2Fe-2S]-[ferredoxin] + H2O = (2E)-4-hydroxy-3-methylbut-2-enyl diphosphate + 2 reduced [2Fe-2S]-[ferredoxin] + 2 H(+). The protein operates within isoprenoid biosynthesis; dimethylallyl diphosphate biosynthesis; dimethylallyl diphosphate from (2E)-4-hydroxy-3-methylbutenyl diphosphate: step 1/1. It functions in the pathway isoprenoid biosynthesis; isopentenyl diphosphate biosynthesis via DXP pathway; isopentenyl diphosphate from 1-deoxy-D-xylulose 5-phosphate: step 6/6. Catalyzes the conversion of 1-hydroxy-2-methyl-2-(E)-butenyl 4-diphosphate (HMBPP) into a mixture of isopentenyl diphosphate (IPP) and dimethylallyl diphosphate (DMAPP). Acts in the terminal step of the DOXP/MEP pathway for isoprenoid precursor biosynthesis. The chain is 4-hydroxy-3-methylbut-2-enyl diphosphate reductase from Clostridioides difficile (strain 630) (Peptoclostridium difficile).